We begin with the raw amino-acid sequence, 644 residues long: 1-deoxy-D-xylulose-5-phosphate synthase (644 aa).

Residues His-78 and 120-122 (GHA) contribute to the thiamine diphosphate site. Position 149 (Asp-149) interacts with Mg(2+). Residues 150-151 (AA), Asn-178, and Glu-373 each bind thiamine diphosphate. Asn-178 lines the Mg(2+) pocket.

This sequence belongs to the transketolase family. DXPS subfamily. Homodimer. The cofactor is Mg(2+). Thiamine diphosphate is required as a cofactor.

It carries out the reaction D-glyceraldehyde 3-phosphate + pyruvate + H(+) = 1-deoxy-D-xylulose 5-phosphate + CO2. It participates in metabolic intermediate biosynthesis; 1-deoxy-D-xylulose 5-phosphate biosynthesis; 1-deoxy-D-xylulose 5-phosphate from D-glyceraldehyde 3-phosphate and pyruvate: step 1/1. Catalyzes the acyloin condensation reaction between C atoms 2 and 3 of pyruvate and glyceraldehyde 3-phosphate to yield 1-deoxy-D-xylulose-5-phosphate (DXP). The polypeptide is 1-deoxy-D-xylulose-5-phosphate synthase (Chlamydia felis (strain Fe/C-56) (Chlamydophila felis)).